The following is a 209-amino-acid chain: D-aminoacyl-tRNA deacylase 1 (209 aa).

The short motif at 139 to 140 (GP) is the Gly-cisPro motif, important for rejection of L-amino acids element. The interval 142 to 209 (TIELESPAPG…EGDVSSEREP (68 aa)) is disordered. Basic and acidic residues-rich tracts occupy residues 159 to 170 (QLSKLEKQQQRK) and 181 to 194 (SSKERNAPRKEDRS). A phosphoserine mark is found at S197, S204, and S205.

This sequence belongs to the DTD family. As to quaternary structure, homodimer. Interacts with CDC45 and TOPBP1. Post-translationally, preferentially phosphorylated in cells arrested early in S phase. Phosphorylation in the C-terminus weakens the interaction with CDC45.

It is found in the nucleus. Its subcellular location is the cytoplasm. It catalyses the reaction glycyl-tRNA(Ala) + H2O = tRNA(Ala) + glycine + H(+). The catalysed reaction is a D-aminoacyl-tRNA + H2O = a tRNA + a D-alpha-amino acid + H(+). Its function is as follows. An aminoacyl-tRNA editing enzyme that deacylates mischarged D-aminoacyl-tRNAs. Also deacylates mischarged glycyl-tRNA(Ala), protecting cells against glycine mischarging by AlaRS. Acts via tRNA-based rather than protein-based catalysis; rejects L-amino acids rather than detecting D-amino acids in the active site. By recycling D-aminoacyl-tRNA to D-amino acids and free tRNA molecules, this enzyme counteracts the toxicity associated with the formation of D-aminoacyl-tRNA entities in vivo and helps enforce protein L-homochirality. Functionally, ATPase involved in DNA replication, may facilitate loading of CDC45 onto pre-replication complexes. The chain is D-aminoacyl-tRNA deacylase 1 (Dtd1) from Mus musculus (Mouse).